A 137-amino-acid polypeptide reads, in one-letter code: Cellular retinoic acid-binding protein 1 (137 aa).

Positions 21–31 (KALGVNAMLRK) match the Nuclear localization signal motif. Residue 132–134 (RIY) coordinates all-trans-retinoate.

The protein belongs to the calycin superfamily. Fatty-acid binding protein (FABP) family.

The protein resides in the cytoplasm. Cytosolic CRABPs may regulate the access of retinoic acid to the nuclear retinoic acid receptors. In Homo sapiens (Human), this protein is Cellular retinoic acid-binding protein 1 (CRABP1).